The sequence spans 607 residues: ATP-dependent RNA helicase-like protein DB10 (607 aa).

A compositionally biased stretch (polar residues) spans 1–10; it reads MAVVTASSAG. 2 disordered regions span residues 1–25 and 66–108; these read MAVV…KPWK and VFVS…DGTS. The region spanning 18–52 is the WW domain; it reads PTLPKPWKGLVDGTTGFIYFWNPETNDTQYERPVP. Over residues 89–98 the composition is skewed to polar residues; sequence RGSNNKIARS. A compositionally biased stretch (basic and acidic residues) spans 99-108; sequence SSDRFHDGTS. Positions 145–173 match the Q motif motif; the sequence is TSFEATGFPSEIVREMHQAGFSAPTPIQA. In terms of domain architecture, Helicase ATP-binding spans 176 to 350; sequence WPIALQGRDI…ADLLVNSVQV (175 aa). Position 189 to 196 (189 to 196) interacts with ATP; that stretch reads AKTGSGKT. A DEAD box motif is present at residues 298–301; that stretch reads DEAD. The 145-residue stretch at 379–523 folds into the Helicase C-terminal domain; that stretch reads RVEQILRSKE…CVPTELRDMA (145 aa). The disordered stretch occupies residues 519–607; sequence LRDMASRGGG…WSGKKSRFTD (89 aa). The span at 538 to 548 shows a compositional bias: gly residues; the sequence is SGPGGRGGRGG. The segment covering 562-574 has biased composition (basic and acidic residues); it reads GYDRGSRDSDRYG.

This sequence belongs to the DEAD box helicase family.

The catalysed reaction is ATP + H2O = ADP + phosphate + H(+). The chain is ATP-dependent RNA helicase-like protein DB10 from Nicotiana sylvestris (Wood tobacco).